The following is a 446-amino-acid chain: 5-hydroxytryptamine receptor (446 aa).

At 1 to 65 (MEGAEGQEEL…AALVRAAAKA (65 aa)) the chain is on the extracellular side. Asparagine 23, asparagine 27, asparagine 36, and asparagine 42 each carry an N-linked (GlcNAc...) asparagine glycan. Residues 66-88 (VVLGLLILATVVGNVFVIAAILL) traverse the membrane as a helical segment. At 89–98 (ERHLRSAANN) the chain is on the cytoplasmic side. The helical transmembrane segment at 99–120 (LILSLAVADLLVACLVMPLGAV) threads the bilayer. Over 121–135 (YEVVQRWTLGPELCD) the chain is Extracellular. The cysteines at positions 134 and 214 are disulfide-linked. Residues 136–157 (MWTSGDVLCCTASILHLVAIAL) form a helical membrane-spanning segment. Residues 158-176 (DRYWAVTNIDYIHASTAKR) lie on the Cytoplasmic side of the membrane. A helical transmembrane segment spans residues 177 to 199 (VGMMIACVWTVSFFVCIAQLLGW). Residues 200-227 (KDPDWNQRVSEDLRCVVSQDVGYQIFAT) lie on the Extracellular side of the membrane. Residues 228–249 (ASSFYVPVLIILILYWRIYQTA) traverse the membrane as a helical segment. Residues 250-367 (RKRIRRRRGA…SKRERKAAKT (118 aa)) are Cytoplasmic-facing. The span at 304–324 (TTTGFTNVSSNNTSPEKQSCA) shows a compositional bias: polar residues. A disordered region spans residues 304-329 (TTTGFTNVSSNNTSPEKQSCANGLEA). Residues 368–391 (LAIITGAFVACWLPFFVLAILVPT) form a helical membrane-spanning segment. Residues 392–399 (CDCEVSPV) are Extracellular-facing. A helical transmembrane segment spans residues 400–422 (LTSLSLWLGYFNSTLNPVIYTVF). The Cytoplasmic segment spans residues 423 to 446 (SPEFRHAFQRLLCGRRVRRRRAPQ).

This sequence belongs to the G-protein coupled receptor 1 family.

It localises to the cell membrane. Functionally, this is a receptor for 5-hydroxytryptamine (serotonin), a biogenic hormone that function as a neurotransmitter, a hormone, and a mitogen. The protein is 5-hydroxytryptamine receptor of Bombyx mori (Silk moth).